The sequence spans 482 residues: tRNA sulfurtransferase (482 aa).

In terms of domain architecture, THUMP spans 61–165; that stretch reads LAIRDALTRI…DDRLLLIKGR (105 aa). Residues 183 to 184, Lys265, Gly287, and Gln296 each bind ATP; that span reads LI. A disulfide bond links Cys344 and Cys456. A Rhodanese domain is found at 404–482; the sequence is FGPNDVILDI…GFNNVKVYRP (79 aa). Cys456 serves as the catalytic Cysteine persulfide intermediate.

The protein belongs to the ThiI family.

The protein resides in the cytoplasm. The catalysed reaction is [ThiI sulfur-carrier protein]-S-sulfanyl-L-cysteine + a uridine in tRNA + 2 reduced [2Fe-2S]-[ferredoxin] + ATP + H(+) = [ThiI sulfur-carrier protein]-L-cysteine + a 4-thiouridine in tRNA + 2 oxidized [2Fe-2S]-[ferredoxin] + AMP + diphosphate. The enzyme catalyses [ThiS sulfur-carrier protein]-C-terminal Gly-Gly-AMP + S-sulfanyl-L-cysteinyl-[cysteine desulfurase] + AH2 = [ThiS sulfur-carrier protein]-C-terminal-Gly-aminoethanethioate + L-cysteinyl-[cysteine desulfurase] + A + AMP + 2 H(+). It functions in the pathway cofactor biosynthesis; thiamine diphosphate biosynthesis. Catalyzes the ATP-dependent transfer of a sulfur to tRNA to produce 4-thiouridine in position 8 of tRNAs, which functions as a near-UV photosensor. Also catalyzes the transfer of sulfur to the sulfur carrier protein ThiS, forming ThiS-thiocarboxylate. This is a step in the synthesis of thiazole, in the thiamine biosynthesis pathway. The sulfur is donated as persulfide by IscS. The polypeptide is tRNA sulfurtransferase (Shigella boydii serotype 4 (strain Sb227)).